A 465-amino-acid polypeptide reads, in one-letter code: Cysteine--tRNA ligase (465 aa).

Residue cysteine 27 coordinates Zn(2+). Positions 29 to 39 (PTVYDFIHIGN) match the 'HIGH' region motif. 3 residues coordinate Zn(2+): cysteine 207, histidine 232, and glutamate 236. The 'KMSKS' region signature appears at 264-268 (KMSKS). Lysine 267 contacts ATP.

Belongs to the class-I aminoacyl-tRNA synthetase family. Monomer. Requires Zn(2+) as cofactor.

The protein localises to the cytoplasm. The enzyme catalyses tRNA(Cys) + L-cysteine + ATP = L-cysteinyl-tRNA(Cys) + AMP + diphosphate. In Caldicellulosiruptor saccharolyticus (strain ATCC 43494 / DSM 8903 / Tp8T 6331), this protein is Cysteine--tRNA ligase.